Here is a 320-residue protein sequence, read N- to C-terminus: Malate dehydrogenase (320 aa).

Residues 10-15 and Asp34 contribute to the NAD(+) site; that span reads GSGMIG. Positions 83 and 89 each coordinate substrate. NAD(+) is bound by residues Asn96 and 119-121; that span reads ITN. 2 residues coordinate substrate: Asn121 and Arg152. His176 functions as the Proton acceptor in the catalytic mechanism.

It belongs to the LDH/MDH superfamily. MDH type 3 family.

It carries out the reaction (S)-malate + NAD(+) = oxaloacetate + NADH + H(+). In terms of biological role, catalyzes the reversible oxidation of malate to oxaloacetate. This Rhizobium johnstonii (strain DSM 114642 / LMG 32736 / 3841) (Rhizobium leguminosarum bv. viciae) protein is Malate dehydrogenase.